Here is a 312-residue protein sequence, read N- to C-terminus: Olfactory receptor-like protein COR6 (312 aa).

The Extracellular segment spans residues 1–26 (MASGNCTTPTTFILSGLTDNPGLQMP). Asn5 is a glycosylation site (N-linked (GlcNAc...) asparagine). A helical membrane pass occupies residues 27 to 49 (LFMVFLAIYTITLLTNLGLIALI). The Cytoplasmic segment spans residues 50–57 (SIDLQLQT). The chain crosses the membrane as a helical span at residues 58-79 (PMYIFLQNLSFTDAVYSTVITP). Topologically, residues 80-100 (KMLATFLEETKTISYVGCILQ) are extracellular. Cys97 and Cys179 are oxidised to a cystine. Residues 101–120 (YFSFVLLTVRECLLLAVMAY) traverse the membrane as a helical segment. The Cytoplasmic segment spans residues 121–139 (DRYAAICKPLLYPAIMTKA). Residues 140–164 (VCWRLVKGLYSLAFLNFLVHTSGLL) traverse the membrane as a helical segment. Over 165-205 (KLSFCSSNVVNHFFCDNSPLFQISSSSTALNELLVFIFGSL) the chain is Extracellular. A helical transmembrane segment spans residues 206-226 (FVMSSIITILISYVFIILTVV). The Cytoplasmic segment spans residues 227–239 (RIRSKERKYKAFS). A helical transmembrane segment spans residues 240–260 (TCTSHLMAVSLFHGTIVFMYF). Over 261–271 (QPANNFSLDKD) the chain is Extracellular. The helical transmembrane segment at 272–292 (KIMSLFYTVVIPMLNPLIYSW) threads the bilayer. The Cytoplasmic segment spans residues 293–312 (RNKEVKDALHRAIATAVLFH).

The protein belongs to the G-protein coupled receptor 1 family.

Its subcellular location is the cell membrane. Odorant receptor. The polypeptide is Olfactory receptor-like protein COR6 (COR6) (Gallus gallus (Chicken)).